The sequence spans 268 residues: 3-methyl-2-oxobutanoate hydroxymethyltransferase (268 aa).

Residues aspartate 41 and aspartate 80 each coordinate Mg(2+). Residues 41–42 (DS), aspartate 80, and lysine 110 contribute to the 3-methyl-2-oxobutanoate site. A Mg(2+)-binding site is contributed by glutamate 112. The active-site Proton acceptor is glutamate 178.

This sequence belongs to the PanB family. As to quaternary structure, homodecamer; pentamer of dimers. Mg(2+) is required as a cofactor.

It localises to the cytoplasm. The enzyme catalyses 3-methyl-2-oxobutanoate + (6R)-5,10-methylene-5,6,7,8-tetrahydrofolate + H2O = 2-dehydropantoate + (6S)-5,6,7,8-tetrahydrofolate. The protein operates within cofactor biosynthesis; coenzyme A biosynthesis. Functionally, catalyzes the reversible reaction in which hydroxymethyl group from 5,10-methylenetetrahydrofolate is transferred onto alpha-ketoisovalerate to form ketopantoate. This is 3-methyl-2-oxobutanoate hydroxymethyltransferase from Natronomonas pharaonis (strain ATCC 35678 / DSM 2160 / CIP 103997 / JCM 8858 / NBRC 14720 / NCIMB 2260 / Gabara) (Halobacterium pharaonis).